An 870-amino-acid polypeptide reads, in one-letter code: MKSPRFRHSQKYIGSKPYYGYYENDHYIVSWCRGHLLELKNPEEMDPKYKLFQLEHLPLIFQPSYKVIQENAEQLQILVKLLQRPDVDHAVNICDADREGELIYREVYEYAGVNKKQSRVYKSSFEAAELEAALNRLESASKYDGLAYSAKARQYLDYLLGMNITRGCTTKLAQNKFLLSSGRVQMCLLHEIRQRELAIENYREQSYYHLQLITDLGLKPVMKTEDQVLNPSPLKSLGENLKDQYLTVEDFKEGTRKQNPKLLYNLTDLYKDAHAQLQINAETAKKHIQNLYEEGFITYPRSSSRHLPTEQVDRVKGVMQALAKSRYSLLVQSVDIDAIDIKHKTFDDDLVSSHFAIIPTTKQYQEEGRPEIEKQLYSLVVKRFVGNFMRPAVYLVRDVSLIDAMGNTYQIKESVLREKGFLEVFQEEVKEESVETFKVPILQKGQELQIYDFELQESKTKKPALHTESSILTFMETAGRKIDDEHLKELMKGKRIGTVATEAAFIPVLHEKNFIDIEKGKIITTPIGRAFIEQFPVQQIKDPLYTAEMEGMIHRIEKNEMSYENFIAQTNAFVQKITQEIIRIPDTVSYNLIETWKKQIEVCQCPCGNGIILDRGKFFGCSNHPNCNKGLPKRVKEKTIPTAQVKKLFEENKTDIIKGFKSNGKEFSAYLAFVNGEVSFNLPSVEELSLGQCPKCQKGKILNRKTFFGCSEYQNGCDFMLPAKIKGKKLSDSQIKKLVNNHVTDFINGFSGEKGEFTAAIRLKTDLSICFEFPTTDDRTVGKCPLCQSRVIIGKTNYLCEQYKRGCDFIVSGMILEKRITASQIKKLLEKNMTDTVKGFVSKKTGKSFDAKLTYDSTQKRVTFIYEKKK.

The region spanning 1 to 128 is the Toprim domain; the sequence is MKSPRFRHSQ…RVYKSSFEAA (128 aa). Positions 143-578 constitute a Topo IA-type catalytic domain; it reads YDGLAYSAKA…QTNAFVQKIT (436 aa). The tract at residues 180–185 is interaction with DNA; the sequence is SSGRVQ. Residue Y299 is the O-(5'-phospho-DNA)-tyrosine intermediate of the active site. 3 consecutive C4-type zinc fingers follow at residues 603–627, 693–717, and 784–807; these read CQCP…HPNC, CPKC…QNGC, and CPLC…KRGC.

The protein belongs to the type IA topoisomerase family. As to quaternary structure, monomer.

It carries out the reaction ATP-independent breakage of single-stranded DNA, followed by passage and rejoining.. Releases the supercoiling and torsional tension of DNA, which is introduced during the DNA replication and transcription, by transiently cleaving and rejoining one strand of the DNA duplex. Introduces a single-strand break via transesterification at a target site in duplex DNA. The scissile phosphodiester is attacked by the catalytic tyrosine of the enzyme, resulting in the formation of a DNA-(5'-phosphotyrosyl)-enzyme intermediate and the expulsion of a 3'-OH DNA strand. The free DNA strand then undergoes passage around the unbroken strand, thus removing DNA supercoils. Finally, in the religation step, the DNA 3'-OH attacks the covalent intermediate to expel the active-site tyrosine and restore the DNA phosphodiester backbone. This Bacillus anthracis protein is DNA topoisomerase 1 (topX).